Consider the following 161-residue polypeptide: Protein-export protein SecB (161 aa).

The protein belongs to the SecB family. In terms of assembly, homotetramer, a dimer of dimers. One homotetramer interacts with 1 SecA dimer.

It is found in the cytoplasm. Its function is as follows. One of the proteins required for the normal export of preproteins out of the cell cytoplasm. It is a molecular chaperone that binds to a subset of precursor proteins, maintaining them in a translocation-competent state. It also specifically binds to its receptor SecA. In Pseudomonas fluorescens (strain Pf0-1), this protein is Protein-export protein SecB.